The chain runs to 179 residues: MNESKRENIQVINIGDCRAVLCKNGLAIPLNKDHKPIWPDEKRRIDRVNEKYETNEKIHFDAGDWRIGDLSVSRSFGDLDNTPYVTHVPDLFDYQLQSDDEFIIMACDGVWDVLENHEAINFVRDHRNDNHTEFYSIPGKYPNREAFESDNISRKLASYAIARGSTDNVSVIIIFFSKE.

In terms of domain architecture, PPM-type phosphatase spans Met-1–Phe-176.

Its subcellular location is the virion. The protein is PP2C-like domain-containing protein R307 of Acanthamoeba polyphaga mimivirus (APMV).